Consider the following 476-residue polypeptide: MAIRVYNTLTKQKEEFRPLREGEVRMYVCGPTVYDYTHLGHARTYIAFDVIRRYLEHRGYTVLMVMNFTDIDDKIIRRANETGEDPKELAEKFLRYFLEDMKALKVKPADIYPRVTEHIQDIIDFVRKLQEKGYAYEGNDGVYFEVRKFKDYGKLSGIKLEELVKGARVEPGEGKKNPEDFALWKKAKPGEPKWESPWGEGRPGWHIECSTMSTKYLGESFDIHGGGNDLIFPHHENEIAQSEACTGHEWVRYWLHTGFVMVSGEKMSKSLGNFVTIRELLQKYSPEVIRFFVLQKHYRSPLDYTEEGIQHAKNNLERLYNTLENIRVAMEKADVAFRWDEEEFELYETVREARKKFYDAMDDDFNTAEALKAVFEVSNAVNRYLTKVEKPKESVLRKALEFFKIVSEVFGLFEDYFKEQKAGDEEALIELLVSVRAELRKQRNFTLADKIRDELKALGIQLEDTPQGTIWKRISV.

Cys29 is a binding site for Zn(2+). The short motif at 31–41 (PTVYDYTHLGH) is the 'HIGH' region element. Residues Cys209, His234, and Glu238 each coordinate Zn(2+). The 'KMSKS' region motif lies at 266-270 (KMSKS). Lys269 lines the ATP pocket.

Belongs to the class-I aminoacyl-tRNA synthetase family. The cofactor is Zn(2+).

The protein resides in the cytoplasm. It carries out the reaction tRNA(Cys) + L-cysteine + ATP = L-cysteinyl-tRNA(Cys) + AMP + diphosphate. The protein is Cysteine--tRNA ligase of Thermococcus onnurineus (strain NA1).